We begin with the raw amino-acid sequence, 510 residues long: Bifunctional purine biosynthesis protein PurH (510 aa).

In terms of domain architecture, MGS-like spans 1-142 (MRALLSVSDK…KNFKDVLIVT (142 aa)).

This sequence belongs to the PurH family.

The catalysed reaction is (6R)-10-formyltetrahydrofolate + 5-amino-1-(5-phospho-beta-D-ribosyl)imidazole-4-carboxamide = 5-formamido-1-(5-phospho-D-ribosyl)imidazole-4-carboxamide + (6S)-5,6,7,8-tetrahydrofolate. The enzyme catalyses IMP + H2O = 5-formamido-1-(5-phospho-D-ribosyl)imidazole-4-carboxamide. It functions in the pathway purine metabolism; IMP biosynthesis via de novo pathway; 5-formamido-1-(5-phospho-D-ribosyl)imidazole-4-carboxamide from 5-amino-1-(5-phospho-D-ribosyl)imidazole-4-carboxamide (10-formyl THF route): step 1/1. Its pathway is purine metabolism; IMP biosynthesis via de novo pathway; IMP from 5-formamido-1-(5-phospho-D-ribosyl)imidazole-4-carboxamide: step 1/1. The chain is Bifunctional purine biosynthesis protein PurH from Campylobacter concisus (strain 13826).